The following is a 104-amino-acid chain: MIRKGFVMQVNPDCHAEYKKRHDEIFPELVEELKSHGAHHYSIFLDKQRNLLFGYVEIENEQRWNDVAKTAACRKWWAFMRDVMPSNPDNSPVSQELEQVFYLD.

Tyr18 serves as a coordination point for substrate. The active-site Proton donor is the His22. Substrate contacts are provided by residues Tyr41 and Trp76 to Trp77.

The protein belongs to the rhamnose mutarotase family. In terms of assembly, homodimer.

The protein localises to the cytoplasm. The enzyme catalyses alpha-L-rhamnose = beta-L-rhamnose. It functions in the pathway carbohydrate metabolism; L-rhamnose metabolism. Involved in the anomeric conversion of L-rhamnose. The protein is L-rhamnose mutarotase of Mannheimia succiniciproducens (strain KCTC 0769BP / MBEL55E).